The following is a 155-amino-acid chain: Histone H3-like 3 (155 aa).

A disordered region spans residues 34–59; that stretch reads IGVKLPNSYRPGDQTVCKPAPPTDGV.

It belongs to the histone H3 family. As to quaternary structure, the nucleosome is a histone octamer containing two molecules each of H2A, H2B, H3 and H4 assembled in one H3-H4 heterotetramer and two H2A-H2B heterodimers. The octamer wraps approximately 147 bp of DNA. In terms of tissue distribution, pollen specific.

Its subcellular location is the nucleus. It is found in the chromosome. Core component of nucleosome. Nucleosomes wrap and compact DNA into chromatin, limiting DNA accessibility to the cellular machineries which require DNA as a template. Histones thereby play a central role in transcription regulation, DNA repair, DNA replication and chromosomal stability. DNA accessibility is regulated via a complex set of post-translational modifications of histones, also called histone code, and nucleosome remodeling. The chain is Histone H3-like 3 (leH3) from Lilium longiflorum (Trumpet lily).